A 295-amino-acid chain; its full sequence is Non-selective voltage-gated ion channel VDAC2 (295 aa).

Positions 24 and 32 each coordinate ATP. At Lys32 the chain carries N6-acetyllysine; alternate. Residue Lys32 is modified to N6-succinyllysine; alternate. Lys32 participates in a covalent cross-link: Glycyl lysine isopeptide (Lys-Gly) (interchain with G-Cter in ubiquitin); alternate. A run of 2 beta stranded transmembrane segments spans residues 38 to 47 and 51 to 59; these read LVKLDVKTKS and VEFSTSGSS. Glycyl lysine isopeptide (Lys-Gly) (interchain with G-Cter in ubiquitin) cross-links involve residues Lys65 and Lys73. The next 4 beta stranded transmembrane spans lie at 66–76, 81–88, 92–101, and 107–116; these read VSGTLETKYKW, LTFTEKWN, TLGTEIAIED, and LKLTFDTTFS. N6-acetyllysine; alternate is present on Lys121. Lys121 participates in a covalent cross-link: Glycyl lysine isopeptide (Lys-Gly) (interchain with G-Cter in ubiquitin); alternate. Glycyl lysine isopeptide (Lys-Gly) (interchain with G-Cter in ubiquitin) cross-links involve residues Lys122 and Lys125. Transmembrane regions (beta stranded) follow at residues 123–132, 135–142, 149–157, and 162–170; these read SGKIKSAYKR, INLGCDVD, AIHGSAVFG, and LAGYQMTFD. A Glycyl lysine isopeptide (Lys-Gly) (interchain with G-Cter in ubiquitin) cross-link involves residue Lys173. The next 6 membrane-spanning stretches (beta stranded) occupy residues 175–187, 190–197, 201–210, 214–223, 230–239, and 243–250; these read KLTRSNFAVGYRT, FQLHTNVN, EFGGSIYQKV, FDTSVNLAWT, RFGIAAKYQL, and ASISAKVN. Ser205 carries the phosphoserine modification. Ser252 carries the phosphoserine modification. NAD(+) is bound by residues 254-256 and 272-276; these read LIG and SALVD. A run of 2 beta stranded transmembrane segments spans residues 254–263 and 266–275; these read LIGVGYTQTL and GVKLTLSALV. At Lys278 the chain carries N6-acetyllysine; alternate. A Glycyl lysine isopeptide (Lys-Gly) (interchain with G-Cter in ubiquitin); alternate cross-link involves residue Lys278. A beta stranded membrane pass occupies residues 285-294; it reads HKLGLALELE. Lys286 participates in a covalent cross-link: Glycyl lysine isopeptide (Lys-Gly) (interchain with G-Cter in ubiquitin).

Belongs to the eukaryotic mitochondrial porin family. Monomer, homodimer and higher order oligomers; formation of higher order structures is necessary for scramblase activity. Interacts with ARMC12 in a TBC1D21-dependent manner. Interacts with KLC3. Interacts with SPATA33. Interacts with PPP3CC in a SPATA33-dependent manner. Post-translationally, ubiquitinated by PRKN during mitophagy, leading to its degradation and enhancement of mitophagy. Deubiquitinated by USP30.

Its subcellular location is the mitochondrion outer membrane. It is found in the membrane. The enzyme catalyses chloride(in) = chloride(out). The catalysed reaction is K(+)(in) = K(+)(out). It carries out the reaction a 1,2-diacyl-sn-glycero-3-phospho-L-serine(in) = a 1,2-diacyl-sn-glycero-3-phospho-L-serine(out). It catalyses the reaction a 1,2-diacyl-sn-glycero-3-phosphocholine(in) = a 1,2-diacyl-sn-glycero-3-phosphocholine(out). The enzyme catalyses a 1,2-diacyl-sn-glycero-3-phospho-(1D-myo-inositol)(in) = a 1,2-diacyl-sn-glycero-3-phospho-(1D-myo-inositol)(out). Its function is as follows. Non-selective voltage-gated ion channel that mediates the transport of anions and cations through the mitochondrion outer membrane and plasma membrane. The channel adopts an open conformation at zero mV and a closed conformation at both positive and negative potentials. There are two populations of channels; the main that functions in a lower open-state conductance with lower ion selectivity, that switch, in a voltage-dependent manner, from the open to a low-conducting 'closed' state and the other that has a normal ion selectivity in the typical high conductance, 'open' state. Binds various lipids, including the sphingolipid ceramide, the phospholipid phosphatidylcholine, and the sterols cholesterol and oxysterol. Binding of ceramide promotes the mitochondrial outer membrane permeabilization (MOMP) apoptotic pathway. Catalyzes the scrambling of phospholipids across the outer mitochondrial membrane; the mechanism is unrelated to channel activity and is capable of translocating both anionic and zwitterionic phospholipids. The sequence is that of Non-selective voltage-gated ion channel VDAC2 from Mesocricetus auratus (Golden hamster).